Consider the following 425-residue polypeptide: tRNA(Ile)-lysidine synthase (425 aa).

27 to 32 (SGGLDS) serves as a coordination point for ATP.

The protein belongs to the tRNA(Ile)-lysidine synthase family.

It is found in the cytoplasm. It catalyses the reaction cytidine(34) in tRNA(Ile2) + L-lysine + ATP = lysidine(34) in tRNA(Ile2) + AMP + diphosphate + H(+). Ligates lysine onto the cytidine present at position 34 of the AUA codon-specific tRNA(Ile) that contains the anticodon CAU, in an ATP-dependent manner. Cytidine is converted to lysidine, thus changing the amino acid specificity of the tRNA from methionine to isoleucine. This chain is tRNA(Ile)-lysidine synthase, found in Streptococcus pneumoniae serotype 19F (strain G54).